The chain runs to 405 residues: MTIANTPAELLASSISTLASRYAEKVQAGENADTEIASIVSACKDLDALVTPPESWNDRMAMSYTISTAIALLLNWDVFQILAAQAKPTSLETLATSCGCSKSLLRCALREAVAHRMLDELSPETYALNSRSSCLLDENKAAWIHYLTDIGLVTAAYLPKYVKSINGKIPEHSHRIALQMAFNVDETFYEFLHRKDPKRGVNFDKAMQRHIKGDAQASIESVFDFSILRPGAVVVDVGGGKGHHCIRIAKKHPHLSFIIQDYEANGPSDGEDTLPEALARRVRWQRHNFHHKQPMDGADVYLLSNILMDNTVSDCNRILTNIVDAMVPNHSVLLVDDAIDTLSEDSHSAYSSSMNLHMLSCFGTLFRTQEDWLMLFSEVAGGKLSIVSSWMIDAGRMIFALRRKF.

Residues 238–239 (GG), Asp261, and 290–291 (HH) each bind S-adenosyl-L-methionine.

Belongs to the class I-like SAM-binding methyltransferase superfamily. Cation-independent O-methyltransferase family.

It functions in the pathway secondary metabolite biosynthesis. Its function is as follows. N-methyltransferase; part of the gene cluster that mediates the biosynthesis of the benzazepine alkaloid nanangelenin A which contains an unprecedented 3,4-dihydro-1-benzazepine-2,5-dione-N-prenyl-N-acetoxy-anthranilamide scaffold. The first step of nanangelenin biosynthesis is catalyzed by the indoleamine 2,3-dioxygenase nanC which produces N-formyl-kynurenine through the catabolism of tryptophan. The two-module NRPS nanA then utilizes anthranilate (Ant) and L-kynurenine (L-Kyn) to assemble the dipeptide product nanangelenin B. The first adenylation domain of nanA (A1) loads anthranilate onto the T1 domain, while A2 loads kynurenine, generated through spontaneous nonenzymatic deformylation of the nanC-supplied N-formyl-kynurenine. The peptide bond formation between the tethered amino acids is catalyzed by the first condensation domain (C1) between anthranilate's carbonyl carbon and kynurenine's aliphatic primary amine. The second C domain (C2) catalyzes the final cyclization event between the aromatic amine of kynurenine and the tethered carbonyl carbon, yielding nanangelenin B. The terminal T3 domain enhances the catalytic efficiency of C2, suggesting the T2-tethered Ant-L-Kyn is transferred to T3 prior to cyclization by C2. Once released from nanA, nanangelenin B is then prenylated by the prenyltransferase nanD to form nanangelenin C. Nanangelenin C is then N-hydroxylated by the FAD-dependent monooxygenase nanF and further acetylated by the acetyltransferase nanB to yield nanangelenin F. Finally, the N-methyltransferase nanE methylates the amide nitrogen of 1-benzazepine to convert nanangelenin F into nanangelenin A. NanE is also able to methylate most of the intermediates of the pathway such as nanangelenin B and nanangelenin C to produce nanangelenin D and nanangelenin E, respectively. The polypeptide is N-methyltransferase nanE (Aspergillus nanangensis).